A 151-amino-acid chain; its full sequence is MTHPLIPQIIDLATPIVEEMGLDVVEVVFQTNKRPPVLRVDIRNPASDTSLNDCEQVSRALEAVLDETAIMPGAYVLEISSPGISRYLNSERDFIAFKGFEVNIATNPPYKDKKEWRGRLQGRDEKAVYLNRKGRAIAIPCAVITKVQLAD.

Belongs to the RimP family.

It is found in the cytoplasm. Its function is as follows. Required for maturation of 30S ribosomal subunits. The sequence is that of Ribosome maturation factor RimP from Crocosphaera subtropica (strain ATCC 51142 / BH68) (Cyanothece sp. (strain ATCC 51142)).